We begin with the raw amino-acid sequence, 569 residues long: GATOR1 complex protein NPRL3 (569 aa).

Disordered regions lie at residues 27 to 60 and 416 to 477; these read PFQR…EQDG and PSEE…GDSP. Composition is skewed to polar residues over residues 34–52 and 438–468; these read HPAS…SNTG and SLST…NSSA. Ser-476 bears the Phosphoserine mark.

It belongs to the NPR3 family. As to quaternary structure, within the GATOR complex, component of the GATOR1 subcomplex, made of DEPDC5, NPRL2 and NPRL3. GATOR1 mediates the strong interaction of the GATOR complex with small GTPases Rag (RagA/RRAGA, RagB/RRAGB, RagC/RRAGC and/or RagD/RRAGD) heterodimers. GATOR1 interacts with GPR155/LYCHOS; interaction takes place in presence of cholesterol and prevents interaction between GATOR1 and KICSTOR. As to expression, widely expressed. Expressed in the frontal lobe cortex as well as in the temporal, parietal, and occipital lobes.

The protein resides in the lysosome membrane. Functionally, as a component of the GATOR1 complex functions as an inhibitor of the amino acid-sensing branch of the mTORC1 pathway. In response to amino acid depletion, the GATOR1 complex has GTPase activating protein (GAP) activity and strongly increases GTP hydrolysis by RagA/RRAGA (or RagB/RRAGB) within heterodimeric Rag complexes, thereby turning them into their inactive GDP-bound form, releasing mTORC1 from lysosomal surface and inhibiting mTORC1 signaling. In the presence of abundant amino acids, the GATOR1 complex is negatively regulated by GATOR2, the other GATOR subcomplex, in this amino acid-sensing branch of the TORC1 pathway. This chain is GATOR1 complex protein NPRL3, found in Homo sapiens (Human).